Consider the following 952-residue polypeptide: Histone deacetylase 7 (952 aa).

2 transcription repression regions span residues 1 to 268 (MDLR…DSDR) and 218 to 546 (GPNP…EHAG). The interaction with MEF2A stretch occupies residues 49 to 149 (SMDTPMPELQ…LPSDPPEHFP (101 aa)). Position 109 is a phosphoserine (serine 109). Disordered stretches follow at residues 130 to 224 (LSSF…PILG) and 261 to 283 (PARADSDRRTHPTLGPRGPILGS). A Phosphoserine; by MARK2, MARK3 and PKD/PRKD1 modification is found at serine 155. Basic and acidic residues predominate over residues 167–181 (KSLERRKNPLLRKES). Position 181 is a phosphoserine; by PKD/PRKD2 (serine 181). A compositionally biased stretch (low complexity) spans 197 to 212 (SSPSSSSTPASGCSSP). A Phosphoserine modification is found at serine 283. Threonine 286 bears the Phosphothreonine mark. Disordered regions lie at residues 349-377 (LHWPLSRTRSEPLPPSATAPPPPGPMQPR), 389-441 (KRSA…GPAP), and 460-510 (LPRG…SSSE). The residue at position 358 (serine 358) is a Phosphoserine; by PKD/PRKD1. The span at 360–374 (PLPPSATAPPPPGPM) shows a compositional bias: pro residues. A phosphoserine mark is found at serine 364, serine 405, serine 486, serine 487, and serine 507. Residues 482-503 (SRAQSSPAAPASLSAPEPASQA) are compositionally biased toward low complexity. The interval 512–865 (PARTLPFTTG…VAALLGNRVD (354 aa)) is histone deacetylase. Cysteine 533, cysteine 535, and histidine 541 together coordinate Zn(2+). Serine 595 carries the phosphoserine modification. Zn(2+) is bound at residue cysteine 618. Residue histidine 670 is part of the active site. An interaction with SIN3A region spans residues 877–952 (NLNAIRSLEA…LVEEEEPMNL (76 aa)). The Nuclear export signal motif lies at 917 to 952 (KEEVEAVTALASLSVGILAEDRPSEQLVEEEEPMNL).

This sequence belongs to the histone deacetylase family. HD type 2 subfamily. Interacts with HDAC1, HDAC2, HDAC3, HDAC4, HDAC5, NCOR1, NCOR2, SIN3A, SIN3B, RBBP4, RBBP7, MTA1L1, SAP30 and MBD3. Interacts with KAT5 and EDNRA. Interacts with the 14-3-3 protein YWHAE, MEF2A, MEF2B and MEF2C. Interacts with ZMYND15. Interacts with KDM5B. Interacts with PML. Interacts with FOXP3. Interacts with RARA. In terms of processing, may be phosphorylated by CaMK1. Phosphorylated by the PKC kinases PKN1 and PKN2, impairing nuclear import. Phosphorylation at Ser-155 by MARK2, MARK3 and PRKD1 promotes interaction with 14-3-3 proteins and export from the nucleus. Phosphorylation at Ser-155 is a prerequisite for phosphorylation at Ser-181.

The protein resides in the nucleus. The protein localises to the cytoplasm. The enzyme catalyses N(6)-acetyl-L-lysyl-[histone] + H2O = L-lysyl-[histone] + acetate. The catalysed reaction is N(6)-acetyl-L-lysyl-[protein] + H2O = L-lysyl-[protein] + acetate. Responsible for the deacetylation of lysine residues on the N-terminal part of the core histones (H2A, H2B, H3 and H4). Histone deacetylation gives a tag for epigenetic repression and plays an important role in transcriptional regulation, cell cycle progression and developmental events. Histone deacetylases act via the formation of large multiprotein complexes. Involved in muscle maturation by repressing transcription of myocyte enhancer factors such as MEF2A, MEF2B and MEF2C. During muscle differentiation, it shuttles into the cytoplasm, allowing the expression of myocyte enhancer factors. May be involved in Epstein-Barr virus (EBV) latency, possibly by repressing the viral BZLF1 gene. Positively regulates the transcriptional repressor activity of FOXP3. Serves as a corepressor of RARA, causing its deacetylation and inhibition of RARE DNA element binding. In association with RARA, plays a role in the repression of microRNA-10a and thereby in the inflammatory response. Also acetylates non-histone proteins, such as ALKBH5. The protein is Histone deacetylase 7 (HDAC7) of Homo sapiens (Human).